A 640-amino-acid polypeptide reads, in one-letter code: Autophagy-related protein 20 (640 aa).

2 stretches are compositionally biased toward polar residues: residues 1–18 and 126–153; these read MSDL…SETR and AETC…PSVS. Disordered regions lie at residues 1 to 63 and 126 to 156; these read MSDL…NNKV and AETC…SNRK. Position 2 is an N-acetylserine (serine 2). The PX domain occupies 140–301; the sequence is MNGETSASEE…DFLDPNNHNW (162 aa). Residues arginine 192, serine 194, lysine 218, and arginine 267 each coordinate a 1,2-diacyl-sn-glycero-3-phospho-(1D-myo-inositol-3-phosphate). 2 positions are modified to phosphoserine: serine 361 and serine 363. 2 coiled-coil regions span residues 475–512 and 562–593; these read LQNE…DNEM and TASI…KVIK.

The protein belongs to the sorting nexin family. Forms a complex with SNX4 and ATG17.

Its subcellular location is the endosome membrane. The protein localises to the preautophagosomal structure membrane. Functionally, required for cytoplasm to vacuole transport (Cvt), pexophagy and mitophagy. Also involved in endoplasmic reticulum-specific autophagic process and is essential for the survival of cells subjected to severe ER stress. Functions in protein retrieval from the endocytic pathway. Required for proper sorting of the v-SNARE protein SNC1. In Saccharomyces cerevisiae (strain ATCC 204508 / S288c) (Baker's yeast), this protein is Autophagy-related protein 20 (ATG20).